Consider the following 431-residue polypeptide: MVSLEKNDHLMLARQLPLKSVALILAGGRGTRLKDLTNKRAKPAVHFGGKFRIIDFALSNCINSGIRRMGVITQYQSHTLVQHIQRGWSFFNEEMNEFVDLLPAQQRMKGENWYRGTADAVTQNLDIIRRYKAEYVVILAGDHIYKQDYSRMLIDHVEKGARCTVACMPVPIEEASAFGVMAVDENDKIIEFVEKPANPPSMPNDPGKSLASMGIYVFDADYLYELLEEDDRDENSSHDFGKDLIPKITEAGLAYAHPFPLSCVQSDPDAEPYWRDVGTLEAYWKANLDLASVVPELDMYDRNWPIRTYNESLPPAKFVQDRSGSHGMTLNSLVSGGCVISGSVVVQSVLFSRVRVNSFCNIDSAVLLPEVWVGRSCRLRRCVIDRACVIPEGMVIGENAEEDARRFYRSEEGIVLVTREMLRKLGHKQER.

Lysine 39 serves as a coordination point for beta-D-fructose 1,6-bisphosphate. AMP-binding residues include arginine 40, histidine 46, and arginine 52. Position 114 (tyrosine 114) interacts with alpha-D-glucose 1-phosphate. Arginine 130 lines the AMP pocket. Alpha-D-glucose 1-phosphate contacts are provided by residues glycine 179, 194 to 195 (EK), and serine 212. The AMP site is built by glutamate 370 and arginine 386. Residues 419-423 (REMLR) and 429-431 (QER) each bind beta-D-fructose 1,6-bisphosphate.

This sequence belongs to the bacterial/plant glucose-1-phosphate adenylyltransferase family. As to quaternary structure, homotetramer.

It catalyses the reaction alpha-D-glucose 1-phosphate + ATP + H(+) = ADP-alpha-D-glucose + diphosphate. It functions in the pathway glycan biosynthesis; glycogen biosynthesis. Allosterically activated by fructose-1,6-bisphosphate (F16BP) and inhibited by AMP. Its function is as follows. Involved in the biosynthesis of ADP-glucose, a building block required for the elongation reactions to produce glycogen. Catalyzes the reaction between ATP and alpha-D-glucose 1-phosphate (G1P) to produce pyrophosphate and ADP-Glc. The sequence is that of Glucose-1-phosphate adenylyltransferase from Escherichia coli O45:K1 (strain S88 / ExPEC).